The following is a 775-amino-acid chain: K(+)-insensitive pyrophosphate-energized proton pump (775 aa).

Transmembrane regions (helical) follow at residues 9–29 (SLAV…AFFI), 65–85 (ISIL…IIPP), 108–128 (AVAF…GMNV), 160–180 (MLTV…FGIA), and 185–205 (LLGF…GGGI). K208 contributes to the substrate binding site. Mg(2+)-binding residues include D211, D215, and D241. Transmembrane regions (helical) follow at residues 259-279 (VTLV…VGTI), 288-308 (FIIF…IGNL), 327-347 (FYIA…VFMV), 359-379 (FFAT…TEYF), 413-433 (SVWA…IYAG), and 442-462 (AILY…GNTI). D472 is a binding site for Mg(2+). Helical transmembrane passes span 508–528 (IAIG…FTDV), 555–575 (PVFI…ALTI), 622–642 (LISL…TLGV), and 644–664 (ALGG…VFQA). 3 residues coordinate Ca(2+): D671, D697, and D701. K704 provides a ligand contact to substrate. 2 consecutive transmembrane segments (helical) span residues 710-730 (ALNP…PIVV) and 735-755 (GSPG…WAIW).

The protein belongs to the H(+)-translocating pyrophosphatase (TC 3.A.10) family. K(+)-insensitive subfamily. Homodimer. It depends on Mg(2+) as a cofactor.

It localises to the cell membrane. It catalyses the reaction diphosphate + H2O + H(+)(in) = 2 phosphate + 2 H(+)(out). Its function is as follows. Proton pump that utilizes the energy of pyrophosphate hydrolysis as the driving force for proton movement across the membrane. Generates a proton motive force. The polypeptide is K(+)-insensitive pyrophosphate-energized proton pump (Chloroflexus aurantiacus (strain ATCC 29366 / DSM 635 / J-10-fl)).